The primary structure comprises 317 residues: Proline-rich protein 2 (317 aa).

The signal sequence occupies residues 1 to 16 (MLVVLFTVALLALSSA). Residues 15-317 (SAQGPREELQ…PPQGRPQGPQ (303 aa)) form a disordered region. The span at 32 to 44 (QRPPPSGSQPRPP) shows a compositional bias: pro residues. N-linked (GlcNAc...) asparagine glycosylation occurs at asparagine 46. Composition is skewed to pro residues over residues 51–183 (GPPP…PPAG) and 204–288 (QSPP…PTQG). The span at 289–305 (PHPTGGPQQTPPLAGNP) shows a compositional bias: low complexity. Pro residues predominate over residues 306–317 (QGPPQGRPQGPQ).

It is found in the secreted. The polypeptide is Proline-rich protein 2 (Prp2) (Mus musculus (Mouse)).